The primary structure comprises 475 residues: Zinc finger protein 296 (475 aa).

The disordered stretch occupies residues 1-78 (MSRRKAGSAP…SPGPMPAGAA (78 aa)). Lys35 participates in a covalent cross-link: Glycyl lysine isopeptide (Lys-Gly) (interchain with G-Cter in SUMO2). 3 C2H2-type zinc fingers span residues 157–180 (LSCLRCGKQFTVAWKLLRHAQWDH), 231–253 (PTCPVCKKTLSSFSNLKVHMRSH), and 259–281 (YACDQCPYACAQSSKLNRHKKTH). The segment at 275–385 (NRHKKTHRQV…KSGGKSRGPG (111 aa)) is disordered. 2 stretches are compositionally biased toward low complexity: residues 295 to 313 (SQEQASAAPPEPAVHAAAP) and 326 to 338 (GAAATAGVQEPGA). Gly residues predominate over residues 339 to 351 (PGSGAQAGPGGDT). The segment covering 354–367 (AITTEQRTDPANSQ) has biased composition (polar residues). C2H2-type zinc fingers lie at residues 386–408 (GSCEFCGKHFTNSSNLTVHRRSH), 414–436 (YTCEFCNYACAQSSKLNRHRRMH), and 445–468 (FECPHCHVPFGLRATLDKHLRQKH).

Belongs to the krueppel C2H2-type zinc-finger protein family. Interacts with KLF4.

It localises to the nucleus. Functionally, may be a transcriptional corepressor with KLF4. The protein is Zinc finger protein 296 (ZNF296) of Homo sapiens (Human).